The chain runs to 152 residues: SsrA-binding protein (152 aa).

This sequence belongs to the SmpB family.

It is found in the cytoplasm. Required for rescue of stalled ribosomes mediated by trans-translation. Binds to transfer-messenger RNA (tmRNA), required for stable association of tmRNA with ribosomes. tmRNA and SmpB together mimic tRNA shape, replacing the anticodon stem-loop with SmpB. tmRNA is encoded by the ssrA gene; the 2 termini fold to resemble tRNA(Ala) and it encodes a 'tag peptide', a short internal open reading frame. During trans-translation Ala-aminoacylated tmRNA acts like a tRNA, entering the A-site of stalled ribosomes, displacing the stalled mRNA. The ribosome then switches to translate the ORF on the tmRNA; the nascent peptide is terminated with the 'tag peptide' encoded by the tmRNA and targeted for degradation. The ribosome is freed to recommence translation, which seems to be the essential function of trans-translation. The sequence is that of SsrA-binding protein from Helicobacter pylori (strain HPAG1).